Reading from the N-terminus, the 363-residue chain is NAD(P)H-quinone oxidoreductase subunit 1, chloroplastic (363 aa).

Transmembrane regions (helical) follow at residues 28 to 48 (WVLVPILTTVLGITIGVLVIV), 98 to 118 (FSIGPSIAVISILLSYSVIPF), 127 to 147 (LPIGVFLWIAISSVAPIGLLM), 248 to 268 (YSGIKFGLFYVASYLNLLVSS), 300 to 320 (VFGMTISIFITLAKTYLFLFI), and 343 to 363 (FLLPISLGNLLLTTSFQLFSL).

Belongs to the complex I subunit 1 family. As to quaternary structure, NDH is composed of at least 16 different subunits, 5 of which are encoded in the nucleus.

The protein localises to the plastid. It localises to the chloroplast thylakoid membrane. It catalyses the reaction a plastoquinone + NADH + (n+1) H(+)(in) = a plastoquinol + NAD(+) + n H(+)(out). The catalysed reaction is a plastoquinone + NADPH + (n+1) H(+)(in) = a plastoquinol + NADP(+) + n H(+)(out). Functionally, NDH shuttles electrons from NAD(P)H:plastoquinone, via FMN and iron-sulfur (Fe-S) centers, to quinones in the photosynthetic chain and possibly in a chloroplast respiratory chain. The immediate electron acceptor for the enzyme in this species is believed to be plastoquinone. Couples the redox reaction to proton translocation, and thus conserves the redox energy in a proton gradient. This Cucumis sativus (Cucumber) protein is NAD(P)H-quinone oxidoreductase subunit 1, chloroplastic.